We begin with the raw amino-acid sequence, 114 residues long: Iron-sulfur cluster insertion protein ErpA (114 aa).

3 residues coordinate iron-sulfur cluster: cysteine 42, cysteine 106, and cysteine 108.

Belongs to the HesB/IscA family. Homodimer. Iron-sulfur cluster serves as cofactor.

Functionally, required for insertion of 4Fe-4S clusters for at least IspG. In Pseudoalteromonas atlantica (strain T6c / ATCC BAA-1087), this protein is Iron-sulfur cluster insertion protein ErpA.